We begin with the raw amino-acid sequence, 263 residues long: N-glycosylase/DNA lyase (263 aa).

3 residues coordinate 8-oxoguanine: Gln43, Ser71, and Trp82. A helix-hairpin-helix region spans residues 139–204 (RRYYFENMMG…EDVRIKAYTE (66 aa)). The active-site Schiff-base intermediate with DNA is the Lys164. 8-oxoguanine-binding residues include Phe168 and Pro194. The active site involves Asp196. 8-oxoguanine-binding residues include Asp230 and Trp234.

It belongs to the archaeal N-glycosylase/DNA lyase (AGOG) family.

The enzyme catalyses 2'-deoxyribonucleotide-(2'-deoxyribose 5'-phosphate)-2'-deoxyribonucleotide-DNA = a 3'-end 2'-deoxyribonucleotide-(2,3-dehydro-2,3-deoxyribose 5'-phosphate)-DNA + a 5'-end 5'-phospho-2'-deoxyribonucleoside-DNA + H(+). In terms of biological role, DNA repair enzyme that is part of the base excision repair (BER) pathway; protects from oxidative damage by removing the major product of DNA oxidation, 8-oxoguanine (GO), from single- and double-stranded DNA substrates. The sequence is that of N-glycosylase/DNA lyase from Thermococcus kodakarensis (strain ATCC BAA-918 / JCM 12380 / KOD1) (Pyrococcus kodakaraensis (strain KOD1)).